Here is a 155-residue protein sequence, read N- to C-terminus: MVKNTEDKPLAQNKKARHDYEIYETFEAGIVLTGTEIKSVRQAKIQLKDGFARVRNGEVWLSNVHIAPFEQGNIFNVEELRTRKLLLNKKEIAKIDKELSGTGITFIPLKVYLKNGFAKVLMGLARGKKDYDKRESLKRKEQNRDIARQLKAYNR.

This sequence belongs to the SmpB family.

The protein localises to the cytoplasm. In terms of biological role, required for rescue of stalled ribosomes mediated by trans-translation. Binds to transfer-messenger RNA (tmRNA), required for stable association of tmRNA with ribosomes. tmRNA and SmpB together mimic tRNA shape, replacing the anticodon stem-loop with SmpB. tmRNA is encoded by the ssrA gene; the 2 termini fold to resemble tRNA(Ala) and it encodes a 'tag peptide', a short internal open reading frame. During trans-translation Ala-aminoacylated tmRNA acts like a tRNA, entering the A-site of stalled ribosomes, displacing the stalled mRNA. The ribosome then switches to translate the ORF on the tmRNA; the nascent peptide is terminated with the 'tag peptide' encoded by the tmRNA and targeted for degradation. The ribosome is freed to recommence translation, which seems to be the essential function of trans-translation. This is SsrA-binding protein from Lactococcus lactis subsp. cremoris (strain MG1363).